The following is a 291-amino-acid chain: ATP synthase gamma chain (291 aa).

The protein belongs to the ATPase gamma chain family. As to quaternary structure, F-type ATPases have 2 components, CF(1) - the catalytic core - and CF(0) - the membrane proton channel. CF(1) has five subunits: alpha(3), beta(3), gamma(1), delta(1), epsilon(1). CF(0) has three main subunits: a, b and c.

The protein resides in the cell inner membrane. Functionally, produces ATP from ADP in the presence of a proton gradient across the membrane. The gamma chain is believed to be important in regulating ATPase activity and the flow of protons through the CF(0) complex. The protein is ATP synthase gamma chain of Rhodopseudomonas palustris (strain BisB5).